Reading from the N-terminus, the 363-residue chain is Pyrimidine monooxygenase RutA (363 aa).

FMN contacts are provided by residues 49–50, N115, E124, 140–141, and S190; these read IK and RY.

Belongs to the NtaA/SnaA/DszA monooxygenase family. RutA subfamily.

The enzyme catalyses uracil + FMNH2 + NADH + O2 = (Z)-3-ureidoacrylate + FMN + NAD(+) + H2O + H(+). It carries out the reaction thymine + FMNH2 + NADH + O2 = (Z)-2-methylureidoacrylate + FMN + NAD(+) + H2O + H(+). Catalyzes the pyrimidine ring opening between N-3 and C-4 by an unusual flavin hydroperoxide-catalyzed mechanism, adding oxygen atoms in the process to yield ureidoacrylate peracid, that immediately reacts with FMN forming ureidoacrylate and FMN-N(5)-oxide. The FMN-N(5)-oxide reacts spontaneously with NADH to produce FMN. Requires the flavin reductase RutF to regenerate FMN in vivo. The polypeptide is Pyrimidine monooxygenase RutA (Escherichia coli O103:H2 (strain 12009 / EHEC)).